We begin with the raw amino-acid sequence, 227 residues long: ATP-dependent dethiobiotin synthetase BioD (227 aa).

13–18 (DVGKTV) contacts ATP. Thr17 serves as a coordination point for Mg(2+). Lys38 is a catalytic residue. ATP-binding positions include Asp55, 116–119 (EGAG), 176–177 (NR), and 205–207 (PYI). Mg(2+) is bound by residues Asp55 and Glu116.

It belongs to the dethiobiotin synthetase family. Homodimer. It depends on Mg(2+) as a cofactor.

The protein localises to the cytoplasm. It carries out the reaction (7R,8S)-7,8-diammoniononanoate + CO2 + ATP = (4R,5S)-dethiobiotin + ADP + phosphate + 3 H(+). The protein operates within cofactor biosynthesis; biotin biosynthesis; biotin from 7,8-diaminononanoate: step 1/2. Functionally, catalyzes a mechanistically unusual reaction, the ATP-dependent insertion of CO2 between the N7 and N8 nitrogen atoms of 7,8-diaminopelargonic acid (DAPA, also called 7,8-diammoniononanoate) to form a ureido ring. The polypeptide is ATP-dependent dethiobiotin synthetase BioD (Vibrio vulnificus (strain CMCP6)).